The primary structure comprises 417 residues: MFNKSQTLAKVDIEIHQAITQEKVRQEAHIELIASENYTSPAVMEAQGSQLTNKYAEGYPRKRYYGGCEYVDTVEQLAIDRAKVLFGADYANVQPHSGSQANAAVFQALLVPGDTILGMSLVHGGHLTHGAAPSFSGKNFNAIQYGLNEKTGEINYEQVEALVKKHKPKMIIAGFSAYSRVVDWQYFREIADTAGAYLMVDMAHVAGLVVTGEYPSPVAIADVTTTTTHKTLRGPRGGLILAKANEAIEKKLNSAIFPGIQGGPLMHVIAAKAVSFKEAMSDEYKVYQKQVKINAQVMANIFIERGFDVVSGGTDDHLFLVSFIDQRLTGKAVDAALDSAYITVNMNVVPNDPQSPFVTSGIRVGTPAVTTRGFNEADCADLAMWMCDICADLENEAMIDQVREKVTSLCVKHPVYN.

Residues Leu-121 and 125–127 each bind (6S)-5,6,7,8-tetrahydrofolate; that span reads GHL. At Lys-230 the chain carries N6-(pyridoxal phosphate)lysine. 355-357 contacts (6S)-5,6,7,8-tetrahydrofolate; it reads SPF.

It belongs to the SHMT family. Homodimer. Pyridoxal 5'-phosphate is required as a cofactor.

Its subcellular location is the cytoplasm. It carries out the reaction (6R)-5,10-methylene-5,6,7,8-tetrahydrofolate + glycine + H2O = (6S)-5,6,7,8-tetrahydrofolate + L-serine. It functions in the pathway one-carbon metabolism; tetrahydrofolate interconversion. The protein operates within amino-acid biosynthesis; glycine biosynthesis; glycine from L-serine: step 1/1. In terms of biological role, catalyzes the reversible interconversion of serine and glycine with tetrahydrofolate (THF) serving as the one-carbon carrier. This reaction serves as the major source of one-carbon groups required for the biosynthesis of purines, thymidylate, methionine, and other important biomolecules. Also exhibits THF-independent aldolase activity toward beta-hydroxyamino acids, producing glycine and aldehydes, via a retro-aldol mechanism. The polypeptide is Serine hydroxymethyltransferase (Ruthia magnifica subsp. Calyptogena magnifica).